Reading from the N-terminus, the 212-residue chain is 3,4-dihydroxy-2-butanone 4-phosphate synthase (212 aa).

Residues 37–38 (RE), aspartate 42, 150–154 (RRGHT), and glutamate 174 contribute to the D-ribulose 5-phosphate site. Glutamate 38 lines the Mg(2+) pocket. Residue histidine 153 participates in Mg(2+) binding.

Belongs to the DHBP synthase family. In terms of assembly, homodimer. It depends on Mg(2+) as a cofactor. Mn(2+) is required as a cofactor.

It carries out the reaction D-ribulose 5-phosphate = (2S)-2-hydroxy-3-oxobutyl phosphate + formate + H(+). It functions in the pathway cofactor biosynthesis; riboflavin biosynthesis; 2-hydroxy-3-oxobutyl phosphate from D-ribulose 5-phosphate: step 1/1. Its function is as follows. Catalyzes the conversion of D-ribulose 5-phosphate to formate and 3,4-dihydroxy-2-butanone 4-phosphate. The chain is 3,4-dihydroxy-2-butanone 4-phosphate synthase from Shewanella pealeana (strain ATCC 700345 / ANG-SQ1).